We begin with the raw amino-acid sequence, 336 residues long: Pyridoxal 5'-phosphate synthase subunit PdxS (336 aa).

Asp-33 serves as a coordination point for D-ribose 5-phosphate. The active-site Schiff-base intermediate with D-ribose 5-phosphate is Lys-90. Gly-162 is a binding site for D-ribose 5-phosphate. Arg-174 is a binding site for D-glyceraldehyde 3-phosphate. D-ribose 5-phosphate is bound by residues Gly-260 and Gly-281–Ser-282.

It belongs to the PdxS/SNZ family. In terms of assembly, in the presence of PdxT, forms a dodecamer of heterodimers.

It carries out the reaction aldehydo-D-ribose 5-phosphate + D-glyceraldehyde 3-phosphate + L-glutamine = pyridoxal 5'-phosphate + L-glutamate + phosphate + 3 H2O + H(+). It functions in the pathway cofactor biosynthesis; pyridoxal 5'-phosphate biosynthesis. Its function is as follows. Catalyzes the formation of pyridoxal 5'-phosphate from ribose 5-phosphate (RBP), glyceraldehyde 3-phosphate (G3P) and ammonia. The ammonia is provided by the PdxT subunit. Can also use ribulose 5-phosphate and dihydroxyacetone phosphate as substrates, resulting from enzyme-catalyzed isomerization of RBP and G3P, respectively. This is Pyridoxal 5'-phosphate synthase subunit PdxS from Picrophilus torridus (strain ATCC 700027 / DSM 9790 / JCM 10055 / NBRC 100828 / KAW 2/3).